The following is a 98-amino-acid chain: NADH-ubiquinone oxidoreductase chain 4L (98 aa).

A run of 3 helical transmembrane segments spans residues 1 to 21 (MSMV…GMLV), 29 to 49 (SLLC…VTIL), and 61 to 81 (IILL…LVMV).

This sequence belongs to the complex I subunit 4L family. Core subunit of respiratory chain NADH dehydrogenase (Complex I) which is composed of 45 different subunits.

It is found in the mitochondrion inner membrane. It carries out the reaction a ubiquinone + NADH + 5 H(+)(in) = a ubiquinol + NAD(+) + 4 H(+)(out). In terms of biological role, core subunit of the mitochondrial membrane respiratory chain NADH dehydrogenase (Complex I) which catalyzes electron transfer from NADH through the respiratory chain, using ubiquinone as an electron acceptor. Part of the enzyme membrane arm which is embedded in the lipid bilayer and involved in proton translocation. The chain is NADH-ubiquinone oxidoreductase chain 4L (MT-ND4L) from Odobenus rosmarus rosmarus (Atlantic walrus).